The primary structure comprises 623 residues: Keratin, type I cytoskeletal 9 (623 aa).

A compositionally biased stretch (low complexity) spans 1–13 (MSCRQFSSSYLSR). Positions 1–25 (MSCRQFSSSYLSRSGGGGGGGLGSG) are disordered. The segment at 1–152 (MSCRQFSSSY…GGDGGILTAN (152 aa)) is head. Phosphoserine occurs at positions 14 and 57. Gly residues predominate over residues 14–25 (SGGGGGGGLGSG). The coil 1A stretch occupies residues 153-188 (EKSTMQELNSRLASYLDKVQALEEANNDLENKIQDW). The IF rod domain occupies 153–465 (EKSTMQELNS…NLLEGGQEDF (313 aa)). Residues 189–207 (YDKKGPAAIQKNYSPYYNT) are linker 1. The tract at residues 208 to 299 (IDDLKDQIVD…KNHKEEMSQL (92 aa)) is coil 1B. The segment at 300–322 (TGQNSGDVNVEINVAPGKDLTKT) is linker 12. A coil 2 region spans residues 323-461 (LNDMRQEYEQ…ETYHNLLEGG (139 aa)). 2 disordered regions span residues 462-496 (QEDF…SGGS) and 534-623 (YGGG…SSHS). The interval 462-623 (QEDFESSGAG…GGGSGKSSHS (162 aa)) is tail. Gly residues predominate over residues 471 to 496 (GKIGLGGRGGSGGSYGRGSRGGSGGS).

This sequence belongs to the intermediate filament family. As to quaternary structure, heterotetramer of two type I and two type II keratins. In terms of tissue distribution, expressed in the terminally differentiated epidermis of palms and soles.

May serve an important special function either in the mature palmar and plantar skin tissue or in the morphogenetic program of the formation of these tissues. Plays a role in keratin filament assembly. This is Keratin, type I cytoskeletal 9 (KRT9) from Homo sapiens (Human).